The chain runs to 1265 residues: Topoisomerase 1-associated factor 1 (1265 aa).

A compositionally biased stretch (polar residues) spans 650-659 (DVNGNKNGQD). Disordered regions lie at residues 650–670 (DVNG…DAIS), 1019–1052 (GKQI…DDDT), and 1167–1226 (HLSL…DPPS). Positions 1026-1039 (TAKKRSAIKPKSRK) are enriched in basic residues. 2 stretches are compositionally biased toward low complexity: residues 1171–1188 (SPNN…LSSD) and 1201–1211 (SDSEYNSSNSS).

Belongs to the timeless family. In terms of assembly, component of the fork protection complex (FPC) consisting of TOF1 and CSM3.

It localises to the nucleus. Functionally, forms a fork protection complex (FPC) with CSM3 and which is required for chromosome segregation during meiosis and DNA damage repair. FPC coordinates leading and lagging strand synthesis and moves with the replication fork. FPC stabilizes replication forks in a configuration that is recognized by replication checkpoint sensors. In Eremothecium gossypii (strain ATCC 10895 / CBS 109.51 / FGSC 9923 / NRRL Y-1056) (Yeast), this protein is Topoisomerase 1-associated factor 1 (TOF1).